The primary structure comprises 360 residues: UDP-N-acetylglucosamine--N-acetylmuramyl-(pentapeptide) pyrophosphoryl-undecaprenol N-acetylglucosamine transferase (360 aa).

Residues S198 and Q289 each contribute to the UDP-N-acetyl-alpha-D-glucosamine site.

It belongs to the glycosyltransferase 28 family. MurG subfamily.

The protein localises to the cell membrane. The catalysed reaction is Mur2Ac(oyl-L-Ala-gamma-D-Glu-L-Lys-D-Ala-D-Ala)-di-trans,octa-cis-undecaprenyl diphosphate + UDP-N-acetyl-alpha-D-glucosamine = beta-D-GlcNAc-(1-&gt;4)-Mur2Ac(oyl-L-Ala-gamma-D-Glu-L-Lys-D-Ala-D-Ala)-di-trans,octa-cis-undecaprenyl diphosphate + UDP + H(+). Its pathway is cell wall biogenesis; peptidoglycan biosynthesis. In terms of biological role, cell wall formation. Catalyzes the transfer of a GlcNAc subunit on undecaprenyl-pyrophosphoryl-MurNAc-pentapeptide (lipid intermediate I) to form undecaprenyl-pyrophosphoryl-MurNAc-(pentapeptide)GlcNAc (lipid intermediate II). This chain is UDP-N-acetylglucosamine--N-acetylmuramyl-(pentapeptide) pyrophosphoryl-undecaprenol N-acetylglucosamine transferase, found in Streptococcus pyogenes serotype M3 (strain SSI-1).